We begin with the raw amino-acid sequence, 205 residues long: Peroxynitrite isomerase (205 aa).

Positions 1–23 (MTEPDPAAAEQRPSVGRNLPTFQ) are disordered. The GXWXGXG motif lies at 52 to 58 (GVWRGEG). Residues T63, K168, and H195 each coordinate heme b.

It belongs to the nitrobindin family. As to quaternary structure, homodimer. Heme b serves as cofactor.

The enzyme catalyses peroxynitrite = nitrate. It functions in the pathway nitrogen metabolism. In terms of biological role, heme-binding protein able to scavenge peroxynitrite and to protect free L-tyrosine against peroxynitrite-mediated nitration, by acting as a peroxynitrite isomerase that converts peroxynitrite to nitrate. Therefore, this protein likely plays a role in peroxynitrite sensing and in the detoxification of reactive nitrogen and oxygen species (RNS and ROS, respectively). Is able to bind nitric oxide (NO) in vitro, but may act as a sensor of peroxynitrite levels in vivo. This chain is Peroxynitrite isomerase, found in Mycobacteroides abscessus (strain ATCC 19977 / DSM 44196 / CCUG 20993 / CIP 104536 / JCM 13569 / NCTC 13031 / TMC 1543 / L948) (Mycobacterium abscessus).